Here is a 299-residue protein sequence, read N- to C-terminus: Heat stress transcription factor B-2a (299 aa).

A DNA-binding region spans residues 21 to 115 (PTPFLTKTFN…LLREIQRRKI (95 aa)). The segment at 119–157 (HQTVVAPSSEQRNQTMVVSPSNSGEDNNNNQVMSSSPSS) is disordered. The interval 166–211 (TGNGGLSVELLEENEKLRSQNIQLNRELTQMKSICDNIYSLMSNYV) is hydrophobic repeat HR-A/B. The short motif at 261–264 (KRTR) is the Nuclear localization signal element.

It belongs to the HSF family. Class B subfamily. As to quaternary structure, homotrimer. In terms of processing, exhibits temperature-dependent phosphorylation.

Its subcellular location is the nucleus. In terms of biological role, transcriptional regulator that specifically binds DNA sequence 5'-AGAAnnTTCT-3' known as heat shock promoter elements (HSE). This is Heat stress transcription factor B-2a (HSFB2A) from Arabidopsis thaliana (Mouse-ear cress).